Reading from the N-terminus, the 288-residue chain is Cyclin-dependent kinase 2 homolog (288 aa).

Residues 4–284 (YHGLEKIGEG…AKEALQHAYF (281 aa)) form the Protein kinase domain. Residues 10–18 (IGEGTYGVV) and K32 each bind ATP. T14 bears the Phosphothreonine mark. Phosphotyrosine is present on Y15. The active-site Proton acceptor is D125. Phosphothreonine is present on T158.

Belongs to the protein kinase superfamily. CMGC Ser/Thr protein kinase family. CDC2/CDKX subfamily. May form a complex composed of at least the catalytic subunit CRK2 and a cyclin. Mg(2+) is required as a cofactor.

The protein localises to the cytoplasm. It carries out the reaction L-seryl-[protein] + ATP = O-phospho-L-seryl-[protein] + ADP + H(+). The catalysed reaction is L-threonyl-[protein] + ATP = O-phospho-L-threonyl-[protein] + ADP + H(+). It catalyses the reaction [DNA-directed RNA polymerase] + ATP = phospho-[DNA-directed RNA polymerase] + ADP + H(+). Phosphorylation at Thr-14 or Tyr-15 inactivates the enzyme, while phosphorylation at Thr-158 activates it. Serine/threonine-protein kinase. Involved in the control of the cell cycle. Required for entry into S-phase and mitosis. Probable component of the kinase complex that phosphorylates the repetitive C-terminus of RNA polymerase II. The sequence is that of Cyclin-dependent kinase 2 homolog from Plasmodium knowlesi (strain H).